Consider the following 161-residue polypeptide: Short form salivary protein D7S (161 aa).

Residues 1-18 (MKFPSILLAILLFKPITA) form the signal peptide. Cystine bridges form between C33–C67, C47–C155, and C109–C125.

This sequence belongs to the PBP/GOBP family.

The protein resides in the secreted. Functionally, in contrast to the related D7 salivary proteins, does not bind serotonin. This is Short form salivary protein D7S from Culex quinquefasciatus (Southern house mosquito).